We begin with the raw amino-acid sequence, 275 residues long: Large ribosomal subunit protein uL2c (275 aa).

The segment at 225–259 (KNPVDHPHGGGEGRAPIGRSTPVTPWGKPALGRRT) is disordered.

Belongs to the universal ribosomal protein uL2 family. As to quaternary structure, part of the 50S ribosomal subunit.

The protein localises to the plastid. The protein resides in the cyanelle. The sequence is that of Large ribosomal subunit protein uL2c (rpl2) from Cyanophora paradoxa.